A 436-amino-acid chain; its full sequence is mRNA cap guanine-N(7) methyltransferase (436 aa).

The segment at 1-50 (MSTKPEKPIWMSQEDYDRQYGSITGDESSTVSKKDSKVTANAPGDGNGSL) is disordered. An mRNA cap 0 methyltransferase domain is found at 141-424 (SPIIKLRNFN…FYTMFAFRKV (284 aa)). MRNA is bound at residue 150 to 151 (NN). S-adenosyl-L-methionine contacts are provided by Lys154, Gly172, Asp194, Asp223, Gln249, and Tyr254.

It belongs to the class I-like SAM-binding methyltransferase superfamily. mRNA cap 0 methyltransferase family.

The protein resides in the nucleus. The enzyme catalyses a 5'-end (5'-triphosphoguanosine)-ribonucleoside in mRNA + S-adenosyl-L-methionine = a 5'-end (N(7)-methyl 5'-triphosphoguanosine)-ribonucleoside in mRNA + S-adenosyl-L-homocysteine. Its function is as follows. Responsible for methylating the 5'-cap structure of mRNAs. The protein is mRNA cap guanine-N(7) methyltransferase (ABD1) of Saccharomyces cerevisiae (strain ATCC 204508 / S288c) (Baker's yeast).